We begin with the raw amino-acid sequence, 59 residues long: Small, acid-soluble spore protein H 1 (59 aa).

It belongs to the SspH family.

Its subcellular location is the spore core. The polypeptide is Small, acid-soluble spore protein H 1 (sspH1) (Bacillus anthracis).